Consider the following 153-residue polypeptide: S-ribosylhomocysteine lyase (153 aa).

Positions 57, 61, and 124 each coordinate Fe cation.

It belongs to the LuxS family. In terms of assembly, homodimer. Fe cation is required as a cofactor.

The catalysed reaction is S-(5-deoxy-D-ribos-5-yl)-L-homocysteine = (S)-4,5-dihydroxypentane-2,3-dione + L-homocysteine. In terms of biological role, involved in the synthesis of autoinducer 2 (AI-2) which is secreted by bacteria and is used to communicate both the cell density and the metabolic potential of the environment. The regulation of gene expression in response to changes in cell density is called quorum sensing. Catalyzes the transformation of S-ribosylhomocysteine (RHC) to homocysteine (HC) and 4,5-dihydroxy-2,3-pentadione (DPD). This is S-ribosylhomocysteine lyase from Oceanobacillus iheyensis (strain DSM 14371 / CIP 107618 / JCM 11309 / KCTC 3954 / HTE831).